A 402-amino-acid polypeptide reads, in one-letter code: Guanine nucleotide-binding protein subunit alpha-1 (402 aa).

Positions 1–12 (MGCSASKPSEPS) are enriched in polar residues. Residues 1–70 (MGCSASKPSE…PEPQKPAEPA (70 aa)) form a disordered region. Residue glycine 2 is the site of N-myristoyl glycine attachment. The S-palmitoyl cysteine moiety is linked to residue cysteine 3. The segment covering 23–33 (KKVEQVPEPKP) has biased composition (basic and acidic residues). The span at 34–69 (EPQPQPEPQPQPEPPKPAEPAPAPAPAPEPQKPAEP) shows a compositional bias: pro residues. In terms of domain architecture, G-alpha spans 82–402 (EAYGLLLCGA…FISDKYYQDA (321 aa)). Positions 85–98 (GLLLCGAGESGKTT) are G1 motif. GTP is bound by residues glutamate 93, serine 94, glycine 95, lysine 96, threonine 97, threonine 98, aspartate 198, leucine 223, serine 229, glycine 251, asparagine 317, lysine 318, aspartate 320, and alanine 377. Mg(2+) is bound at residue threonine 97. Positions 221-229 (DVLRARIRS) are G2 motif. Serine 229 lines the Mg(2+) pocket. The interval 244–253 (IRIFDVGGQK) is G3 motif. A G4 motif region spans residues 313-320 (FLVCNKFD). Residues 375–380 (IVALNG) are G5 motif.

Belongs to the G-alpha family. G proteins are composed of 3 units; alpha, beta and gamma. The alpha chain contains the guanine nucleotide binding site. Mg(2+) is required as a cofactor.

It localises to the cytoplasm. The protein resides in the perinuclear region. The protein localises to the endomembrane system. Guanine nucleotide-binding proteins (G proteins) are involved as modulators or transducers in various transmembrane signaling systems. This Trichomonas vaginalis protein is Guanine nucleotide-binding protein subunit alpha-1 (GA1).